A 345-amino-acid polypeptide reads, in one-letter code: N-glycosylase/DNA lyase (345 aa).

The DNA site is built by N149, R154, and R204. K249 functions as the Schiff-base intermediate with DNA in the catalytic mechanism. 8-oxoguanine-binding residues include P266 and D268. Residues H270 and Q287 each coordinate DNA. 8-oxoguanine is bound by residues Q315 and F319.

This sequence belongs to the type-1 OGG1 family. Highest expression in testis.

It is found in the nucleus. The protein resides in the nucleoplasm. The protein localises to the nucleus speckle. It localises to the nucleus matrix. The catalysed reaction is 2'-deoxyribonucleotide-(2'-deoxyribose 5'-phosphate)-2'-deoxyribonucleotide-DNA = a 3'-end 2'-deoxyribonucleotide-(2,3-dehydro-2,3-deoxyribose 5'-phosphate)-DNA + a 5'-end 5'-phospho-2'-deoxyribonucleoside-DNA + H(+). Its function is as follows. DNA repair enzyme that incises DNA at 8-oxoG residues. Excises 7,8-dihydro-8-oxoguanine and 2,6-diamino-4-hydroxy-5-N-methylformamidopyrimidine (FAPY) from damaged DNA. Has a beta-lyase activity that nicks DNA 3' to the lesion. This Mus musculus (Mouse) protein is N-glycosylase/DNA lyase (Ogg1).